A 301-amino-acid chain; its full sequence is Probable alpha-L-glutamate ligase (301 aa).

The ATP-grasp domain occupies 104–287 (LQLLSRKGVG…IAGMIIEYIE (184 aa)). Residues Lys141, 178-179 (EY), Asp187, and 211-213 (RSN) each bind ATP. Mg(2+)-binding residues include Asp248, Glu260, and Asn262. Residues Asp248, Glu260, and Asn262 each contribute to the Mn(2+) site.

Belongs to the RimK family. It depends on Mg(2+) as a cofactor. Mn(2+) is required as a cofactor.

The protein is Probable alpha-L-glutamate ligase of Photobacterium profundum (strain SS9).